A 223-amino-acid chain; its full sequence is Putative 3-methyladenine DNA glycosylase (223 aa).

The protein belongs to the DNA glycosylase MPG family.

This chain is Putative 3-methyladenine DNA glycosylase, found in Pseudomonas syringae pv. tomato (strain ATCC BAA-871 / DC3000).